We begin with the raw amino-acid sequence, 334 residues long: L-lactate dehydrogenase B chain (334 aa).

Residues 30 to 58 and R100 contribute to the NAD(+) site; that span reads GQVG…LEDK. Substrate is bound by residues R107, N139, and R170. N139 lines the NAD(+) pocket. Residue H194 is the Proton acceptor of the active site. A substrate-binding site is contributed by T249.

The protein belongs to the LDH/MDH superfamily. LDH family. As to quaternary structure, homotetramer.

Its subcellular location is the cytoplasm. The catalysed reaction is (S)-lactate + NAD(+) = pyruvate + NADH + H(+). The protein operates within fermentation; pyruvate fermentation to lactate; (S)-lactate from pyruvate: step 1/1. Its function is as follows. Interconverts simultaneously and stereospecifically pyruvate and lactate with concomitant interconversion of NADH and NAD(+). This is L-lactate dehydrogenase B chain (ldhb) from Squalus acanthias (Spiny dogfish).